The following is a 140-amino-acid chain: Large ribosomal subunit protein uL11 (140 aa).

It belongs to the universal ribosomal protein uL11 family. Part of the ribosomal stalk of the 50S ribosomal subunit. Interacts with L10 and the large rRNA to form the base of the stalk. L10 forms an elongated spine to which L12 dimers bind in a sequential fashion forming a multimeric L10(L12)X complex. In terms of processing, one or more lysine residues are methylated.

Functionally, forms part of the ribosomal stalk which helps the ribosome interact with GTP-bound translation factors. This chain is Large ribosomal subunit protein uL11, found in Brachyspira hyodysenteriae (strain ATCC 49526 / WA1).